The primary structure comprises 290 residues: 4-hydroxy-3-methylbut-2-enyl diphosphate reductase (290 aa).

Cys13 contributes to the [4Fe-4S] cluster binding site. Positions 41 and 75 each coordinate (2E)-4-hydroxy-3-methylbut-2-enyl diphosphate. 2 residues coordinate dimethylallyl diphosphate: His41 and His75. Positions 41 and 75 each coordinate isopentenyl diphosphate. Position 97 (Cys97) interacts with [4Fe-4S] cluster. A (2E)-4-hydroxy-3-methylbut-2-enyl diphosphate-binding site is contributed by His129. His129 is a binding site for dimethylallyl diphosphate. Position 129 (His129) interacts with isopentenyl diphosphate. Glu131 acts as the Proton donor in catalysis. Thr167 is a binding site for (2E)-4-hydroxy-3-methylbut-2-enyl diphosphate. Position 198 (Cys198) interacts with [4Fe-4S] cluster. The (2E)-4-hydroxy-3-methylbut-2-enyl diphosphate site is built by Ser226, Ser227, Asn228, and Ser270. Ser226, Ser227, Asn228, and Ser270 together coordinate dimethylallyl diphosphate. Isopentenyl diphosphate-binding residues include Ser226, Ser227, Asn228, and Ser270.

The protein belongs to the IspH family. Requires [4Fe-4S] cluster as cofactor.

It catalyses the reaction isopentenyl diphosphate + 2 oxidized [2Fe-2S]-[ferredoxin] + H2O = (2E)-4-hydroxy-3-methylbut-2-enyl diphosphate + 2 reduced [2Fe-2S]-[ferredoxin] + 2 H(+). The enzyme catalyses dimethylallyl diphosphate + 2 oxidized [2Fe-2S]-[ferredoxin] + H2O = (2E)-4-hydroxy-3-methylbut-2-enyl diphosphate + 2 reduced [2Fe-2S]-[ferredoxin] + 2 H(+). It functions in the pathway isoprenoid biosynthesis; dimethylallyl diphosphate biosynthesis; dimethylallyl diphosphate from (2E)-4-hydroxy-3-methylbutenyl diphosphate: step 1/1. The protein operates within isoprenoid biosynthesis; isopentenyl diphosphate biosynthesis via DXP pathway; isopentenyl diphosphate from 1-deoxy-D-xylulose 5-phosphate: step 6/6. Functionally, catalyzes the conversion of 1-hydroxy-2-methyl-2-(E)-butenyl 4-diphosphate (HMBPP) into a mixture of isopentenyl diphosphate (IPP) and dimethylallyl diphosphate (DMAPP). Acts in the terminal step of the DOXP/MEP pathway for isoprenoid precursor biosynthesis. The sequence is that of 4-hydroxy-3-methylbut-2-enyl diphosphate reductase from Parabacteroides distasonis (strain ATCC 8503 / DSM 20701 / CIP 104284 / JCM 5825 / NCTC 11152).